We begin with the raw amino-acid sequence, 351 residues long: Phosphoribosylformylglycinamidine cyclo-ligase (351 aa).

It belongs to the AIR synthase family.

The protein resides in the cytoplasm. The enzyme catalyses 2-formamido-N(1)-(5-O-phospho-beta-D-ribosyl)acetamidine + ATP = 5-amino-1-(5-phospho-beta-D-ribosyl)imidazole + ADP + phosphate + H(+). The protein operates within purine metabolism; IMP biosynthesis via de novo pathway; 5-amino-1-(5-phospho-D-ribosyl)imidazole from N(2)-formyl-N(1)-(5-phospho-D-ribosyl)glycinamide: step 2/2. The chain is Phosphoribosylformylglycinamidine cyclo-ligase from Burkholderia ambifaria (strain MC40-6).